The chain runs to 317 residues: Aquaporin-2 (317 aa).

At 1–75 (MSLRDDLTIN…RSQEFKMQHR (75 aa)) the chain is on the cytoplasmic side. A helical transmembrane segment spans residues 76–96 (EFLAEFIGTLILVLLTCGFCA). Residues 97-108 (EQTLNIEKSKSW) are Extracellular-facing. The helical transmembrane segment at 109 to 129 (LTSSLGSGLSVLIGICVAGHV) threads the bilayer. Over 130-154 (SGGHLNPAITIAFWVFSGFPIRKVP) the chain is Cytoplasmic. An NPA 1 motif is present at residues 135-137 (NPA). The chain crosses the membrane as a helical span at residues 155-175 (MYITAQLLGAFSGAALLYSIV). The Extracellular segment spans residues 176–208 (EPAISQFDHGKRQILGELGTAGIFGTYPPLYVG). A helical transmembrane segment spans residues 209-229 (TGSAVASEVVGTAMLLLVVMV). Residues 230–242 (TGHPNNLPFRTAQ) are Cytoplasmic-facing. A helical membrane pass occupies residues 243 to 263 (GAMIALGVTTISLCIGYTSGF). The Extracellular segment spans residues 264-295 (SLNPARDFGPRLFTAVAGWGIDVFTVHHYYAL). Positions 266–268 (NPA) match the NPA 2 motif. Residues 296 to 316 (VPMFAPILGGLAGGFIYTVFI) traverse the membrane as a helical segment. A topological domain (cytoplasmic) is located at residue Asp317.

This sequence belongs to the MIP/aquaporin (TC 1.A.8) family.

The protein resides in the cell membrane. The catalysed reaction is H2O(in) = H2O(out). It catalyses the reaction glycerol(in) = glycerol(out). In terms of biological role, water channel required to facilitate the transport of water across membranes. Contributes to water uptake of spores during the early stages of spore germination. Aquaporins AQP1 and AQP2 act as extracellular pH sensors and enable the spores to hydrate under favorable conditions and to commence germination. Wounded vegetables and fruit present acidic pH, so the optimal pH range for germination is adapted to the relevant host pH. This is Aquaporin-2 from Rhizopus delemar (strain RA 99-880 / ATCC MYA-4621 / FGSC 9543 / NRRL 43880) (Mucormycosis agent).